The primary structure comprises 406 residues: Corticosteroid-binding globulin (406 aa).

The first 22 residues, 1-22, serve as a signal peptide directing secretion; sequence MPLLLYTCLLWLLSSGLWTVQA. 2 N-linked (GlcNAc...) asparagine glycosylation sites follow: N31 and N96. Cortisol is bound at residue Q255. N-linked (GlcNAc...) asparagine glycosylation occurs at N261. Cortisol is bound at residue D287. 2 N-linked (GlcNAc...) asparagine glycosylation sites follow: N331 and N360. Residue W394 participates in cortisol binding.

The protein belongs to the serpin family. Expressed by the liver; secreted in plasma.

It localises to the secreted. Functionally, major transport protein for glucocorticoids and progestins in the blood of almost all vertebrate species. In Saimiri sciureus (Common squirrel monkey), this protein is Corticosteroid-binding globulin (SERPINA6).